The primary structure comprises 966 residues: MLRAGSVVTCIACKGLLPSRMGVKFRVPLQKLHPLSRAIHHRYSANNNPQRPPHCSAARHYTSLSRLPMRPPKSRSGGHGYQQHRTFWVARLAARLLKLRYILLGSAVGGGYTAKKTYDEWKEMLPDMSEYTWIVPDFVWELSENIDLDKLASALPELEEIAKLLPDMEKIGENFTFLKSLLSSETTGESALRAPDVPPASAAMADSGDKQFKKSSDKEKVDQLQEELLRTQLKYQRMLERLEKENKELRKVVLQKDDKGIHQRKVKKSLIDMYSEVLDILSDYDSNYNTQDHLPRVVVVGDQSAGKTSVLEMIAQARIFPRGSGEMMTRSPVKVTLSEGPHHVAMFKDSSREFDLGKEEDLAALRHEIELRMRKSVKEGQTVSPETISLSVKGPGIQRMVLVDLPGVISTVTTGMAADTKETIFSISKAYMQNPNAIILCIQDGSVDAERSIVTDLVSQMDPQGKRTIFVLTKVDLAEKNLASPSRIQQIVEGKLFPMKALGYFAVVTGKGSPNESIDSIKDYEEDFFQNSRLLKDGMLKAHQVTTKNLSLAVSDCFWKMVRESVEQQADAFKASRFNLETEWKNNYPRLRELDRNELYEKAKNEILDEVISLSQVTPKHWESILQKKLWERVSTHVIENIYLPAAQTMNSGTFNTTVDIKLKQWTDKQLPHKALEVAWETLQEEFARFMAEYKGKDQDDIFDKLKEAVKDESIKRHKWNERAMDSLRVIQHNALEDRSITDKPQWDAAIQFMEETLQSRLKDTESVIADMVGPDWKQRWMSWKNRTPEQHTRNETKNELERLLKLHEDHTAYLANDEVTTVRKNLEARGVEVDPVLIKDTWHQLFRRHFLQKALLHCNLCRRGFYYYQRHFVDSELECNDVVLFWRIQRMLGITANTLRQQLTNTEVRRLEKNVKEVLEDFGEDNEKKVQLITGRRVQLAEDLKKVREIQEKLEAFIEALHKEK.

The transit peptide at 1 to 86 (MLRAGSVVTC…GGHGYQQHRT (86 aa)) directs the protein to the mitochondrion. At 87-95 (FWVARLAAR) the chain is on the mitochondrial matrix side. The chain crosses the membrane as a helical span at residues 96-112 (LLKLRYILLGSAVGGGY). At 113–776 (TAKKTYDEWK…SVIADMVGPD (664 aa)) the chain is on the mitochondrial intermembrane side. The tract at residues 189-217 (ESALRAPDVPPASAAMADSGDKQFKKSSD) is disordered. Residues 207–217 (SGDKQFKKSSD) show a composition bias toward basic and acidic residues. Residues 213–259 (KKSSDKEKVDQLQEELLRTQLKYQRMLERLEKENKELRKVVLQKDDK) are a coiled coil. In terms of domain architecture, Dynamin-type G spans 291 to 567 (QDHLPRVVVV…FWKMVRESVE (277 aa)). The G1 motif stretch occupies residues 301 to 308 (GDQSAGKT). GTP is bound by residues Ser-304, Gly-306, Lys-307, Thr-308, Ser-309, and Gly-323. Position 308 (Thr-308) interacts with Mg(2+). Residues 327 to 330 (MMTR) are G2 motif. Residues Thr-329 and Asp-404 each coordinate Mg(2+). A G3 motif region spans residues 404–407 (DLPG). Residues 473 to 476 (TKVD) form a G4 motif region. The GTP site is built by Lys-474, Asp-476, and Thr-509. The G5 motif stretch occupies residues 507 to 510 (VVTG). Stalk region regions lie at residues 595-842 (DRNE…IKDT) and 880-934 (CNDV…VQLI). The interval 742–862 (TDKPQWDAAI…QKALLHCNLC (121 aa)) is paddle region. An intramembrane segment occupies 777 to 787 (WKQRWMSWKNR). Residues 788–966 (TPEQHTRNET…AFIEALHKEK (179 aa)) are Mitochondrial intermembrane-facing. The cysteines at positions 862 and 880 are disulfide-linked. Residues 901–966 (RQQLTNTEVR…AFIEALHKEK (66 aa)) adopt a coiled-coil conformation.

It belongs to the TRAFAC class dynamin-like GTPase superfamily. Dynamin/Fzo/YdjA family. Oligomeric complex consisting of membrane-bound and soluble forms of OPA1. Cleaved by OMA1 or YME1L downstream of the transmembrane region in response to different signals to generate soluble forms. Cleaved by OMA1 at position S1 following stress conditions, generating the short soluble form (Dynamin-like GTPase OPA1, short form; S-OPA1).

The protein localises to the mitochondrion inner membrane. It localises to the mitochondrion intermembrane space. The catalysed reaction is GTP + H2O = GDP + phosphate + H(+). In terms of biological role, dynamin-related GTPase that is essential for normal mitochondrial morphology by mediating fusion of the mitochondrial inner membranes, regulating cristae morphology and maintaining respiratory chain function. Exists in two forms: the transmembrane, long form (Dynamin-like GTPase OPA1, long form; L-OPA1), which is tethered to the inner mitochondrial membrane, and the short soluble form (Dynamin-like GTPase OPA1, short form; S-OPA1), which results from proteolytic cleavage and localizes in the intermembrane space. Both forms (L-OPA1 and S-OPA1) cooperate to catalyze the fusion of the mitochondrial inner membrane. The equilibrium between L-OPA1 and S-OPA1 is essential: excess levels of S-OPA1, produced by cleavage by OMA1 following loss of mitochondrial membrane potential, lead to an impaired equilibrium between L-OPA1 and S-OPA1, inhibiting mitochondrial fusion. The balance between L-OPA1 and S-OPA1 also influences cristae shape and morphology. Its role in mitochondrial morphology is required for mitochondrial genome maintenance. Its function is as follows. Constitutes the transmembrane long form (L-OPA1) that plays a central role in mitochondrial inner membrane fusion and cristae morphology. L-OPA1 and the soluble short form (S-OPA1) form higher-order helical assemblies that coordinate the fusion of mitochondrial inner membranes. Inner membrane-anchored L-OPA1 molecules initiate membrane remodeling by recruiting soluble S-OPA1 to rapidly polymerize into a flexible cylindrical scaffold encaging the mitochondrial inner membrane. Once at the membrane surface, the formation of S-OPA1 helices induce bilayer curvature. OPA1 dimerization through the paddle region, which inserts into cardiolipin-containing membrane, promotes GTP hydrolysis and the helical assembly of a flexible OPA1 lattice on the membrane, which drives membrane curvature and mitochondrial fusion. Plays a role in the maintenance and remodeling of mitochondrial cristae, some invaginations of the mitochondrial inner membrane that provide an increase in the surface area. Probably acts by forming helical filaments at the inside of inner membrane tubes with the shape and dimensions of crista junctions. Constitutes the soluble short form (S-OPA1) generated by cleavage by OMA1, which plays a central role in mitochondrial inner membrane fusion and cristae morphology. The transmembrane long form (L-OPA1) and the S-OPA1 form higher-order helical assemblies that coordinate the fusion of mitochondrial inner membranes. Inner membrane-anchored L-OPA1 molecules initiate membrane remodeling by recruiting soluble S-OPA1 to rapidly polymerize into a flexible cylindrical scaffold encaging the mitochondrial inner membrane. Once at the membrane surface, the formation of S-OPA1 helices induce bilayer curvature. OPA1 dimerization through the paddle region, which inserts into cardiolipin-containing membrane, promotes GTP hydrolysis and the helical assembly of a flexible OPA1 lattice on the membrane, which drives membrane curvature and mitochondrial fusion. Excess levels of S-OPA1 produced by cleavage by OMA1 following stress conditions that induce loss of mitochondrial membrane potential, lead to an impaired equilibrium between L-OPA1 and S-OPA1, thereby inhibiting mitochondrial fusion. Plays a role in the maintenance and remodeling of mitochondrial cristae, some invaginations of the mitochondrial inner membrane that provide an increase in the surface area. Probably acts by forming helical filaments at the inside of inner membrane tubes with the shape and dimensions of crista junctions. The polypeptide is Dynamin-like GTPase OPA1, mitochondrial (Danio rerio (Zebrafish)).